The chain runs to 431 residues: CCA-adding enzyme (431 aa).

Residues serine 50 and lysine 53 each contribute to the ATP site. 2 residues coordinate CTP: serine 50 and lysine 53. Mg(2+) contacts are provided by aspartate 61, aspartate 63, and aspartate 112. Residues histidine 135, lysine 155, and tyrosine 164 each coordinate ATP. Residues histidine 135, lysine 155, and tyrosine 164 each contribute to the CTP site.

This sequence belongs to the tRNA nucleotidyltransferase/poly(A) polymerase family. Archaeal CCA-adding enzyme subfamily. Homodimer. Mg(2+) serves as cofactor.

The catalysed reaction is a tRNA precursor + 2 CTP + ATP = a tRNA with a 3' CCA end + 3 diphosphate. It catalyses the reaction a tRNA with a 3' CCA end + 2 CTP + ATP = a tRNA with a 3' CCACCA end + 3 diphosphate. Functionally, catalyzes the addition and repair of the essential 3'-terminal CCA sequence in tRNAs without using a nucleic acid template. Adds these three nucleotides in the order of C, C, and A to the tRNA nucleotide-73, using CTP and ATP as substrates and producing inorganic pyrophosphate. tRNA 3'-terminal CCA addition is required both for tRNA processing and repair. Also involved in tRNA surveillance by mediating tandem CCA addition to generate a CCACCA at the 3' terminus of unstable tRNAs. While stable tRNAs receive only 3'-terminal CCA, unstable tRNAs are marked with CCACCA and rapidly degraded. The sequence is that of CCA-adding enzyme from Thermoplasma acidophilum (strain ATCC 25905 / DSM 1728 / JCM 9062 / NBRC 15155 / AMRC-C165).